Consider the following 237-residue polypeptide: MKKKSCFTLVTTFAFSLIFSVSALAGSVFWEPLSYFNRSTWEKADGYSNGGVFNCTWRANNVNFTNDGKLKLGLTSSAYNKFDCAEYRSTNIYGYGLYEVSMKPAKNTGIVSSFFTYTGPAHGTQWDEIDIEFLGKDTTKVQFNYYTNGVGGHEKVISLGFDASKGFHTYAFDWQPGYIKWYVDGVLKHTATANIPSTPGKIMMNLWNGTGVDDWLGSYNGANPLYAEYDWVKYTSN.

The N-terminal stretch at 1-23 (MKKKSCFTLVTTFAFSLIFSVSA) is a signal peptide. The GH16 domain occupies 28–237 (VFWEPLSYFN…EYDWVKYTSN (210 aa)). Cysteine 55 and cysteine 84 are oxidised to a cystine. Catalysis depends on glutamate 128, which acts as the Nucleophile. The active-site Proton donor is glutamate 132.

Belongs to the glycosyl hydrolase 16 family.

The enzyme catalyses Hydrolysis of (1-&gt;4)-beta-D-glucosidic linkages in beta-D-glucans containing (1-&gt;3)- and (1-&gt;4)-bonds.. This Paenibacillus macerans (Bacillus macerans) protein is Beta-glucanase.